We begin with the raw amino-acid sequence, 229 residues long: Phosphoglycolate phosphatase (229 aa).

The Nucleophile role is filled by Asp-18. Residues Asp-18, Asp-20, and Asp-176 each coordinate Mg(2+).

Belongs to the HAD-like hydrolase superfamily. CbbY/CbbZ/Gph/YieH family. Mg(2+) serves as cofactor.

It catalyses the reaction 2-phosphoglycolate + H2O = glycolate + phosphate. It participates in organic acid metabolism; glycolate biosynthesis; glycolate from 2-phosphoglycolate: step 1/1. Its function is as follows. Specifically catalyzes the dephosphorylation of 2-phosphoglycolate. Is involved in the dissimilation of the intracellular 2-phosphoglycolate formed during the DNA repair of 3'-phosphoglycolate ends, a major class of DNA lesions induced by oxidative stress. The polypeptide is Phosphoglycolate phosphatase (Xylella fastidiosa (strain Temecula1 / ATCC 700964)).